The sequence spans 163 residues: Nucleotide-binding protein Bcer98_0876 (163 aa).

Belongs to the YajQ family.

Nucleotide-binding protein. The sequence is that of Nucleotide-binding protein Bcer98_0876 from Bacillus cytotoxicus (strain DSM 22905 / CIP 110041 / 391-98 / NVH 391-98).